The following is a 379-amino-acid chain: Alcohol dehydrogenase class-2 isozyme 1 (379 aa).

Zn(2+) is bound by residues cysteine 47, histidine 69, cysteine 99, cysteine 102, cysteine 105, cysteine 113, and cysteine 176. Residues 205–210, aspartate 229, lysine 234, 298–300, and arginine 374 each bind NAD(+); these read GLGGVG and VGV.

The protein belongs to the zinc-containing alcohol dehydrogenase family. Class-II subfamily. As to quaternary structure, homodimer. Zn(2+) is required as a cofactor.

Its subcellular location is the cytoplasm. The enzyme catalyses a primary alcohol + NAD(+) = an aldehyde + NADH + H(+). It carries out the reaction a secondary alcohol + NAD(+) = a ketone + NADH + H(+). The polypeptide is Alcohol dehydrogenase class-2 isozyme 1 (ADH2-1) (Oryctolagus cuniculus (Rabbit)).